We begin with the raw amino-acid sequence, 98 residues long: Large ribosomal subunit protein uL23 (98 aa).

This sequence belongs to the universal ribosomal protein uL23 family. As to quaternary structure, part of the 50S ribosomal subunit. Contacts protein L29, and trigger factor when it is bound to the ribosome.

In terms of biological role, one of the early assembly proteins it binds 23S rRNA. One of the proteins that surrounds the polypeptide exit tunnel on the outside of the ribosome. Forms the main docking site for trigger factor binding to the ribosome. The chain is Large ribosomal subunit protein uL23 from Saccharophagus degradans (strain 2-40 / ATCC 43961 / DSM 17024).